The sequence spans 682 residues: Potassium-transporting ATPase ATP-binding subunit (682 aa).

The next 4 membrane-spanning stretches (helical) occupy residues 34–54, 62–82, 219–239, and 254–274; these read PVMFIVWIGSLLTTFISIAMA, ALFSAAISAWLWVTVLFANFA, IALTILLIALTIVFLLATATL, and VLVALLVCLIPTTIGGLLSAI. D307 (4-aspartylphosphate intermediate) is an active-site residue. ATP contacts are provided by residues D344, E348, 377–384, and K395; that span reads FTAQSRMS. Residues D518 and D522 each contribute to the Mg(2+) site. 3 helical membrane-spanning segments follow: residues 588-608, 616-636, and 656-676; these read FAIIPAAFAATYPQLNALNIM, AILSAVIFNALIIVFLIPLAL, and IYGLGGLLVPFIGIKVIDLLL.

This sequence belongs to the cation transport ATPase (P-type) (TC 3.A.3) family. Type IA subfamily. The system is composed of three essential subunits: KdpA, KdpB and KdpC.

It localises to the cell inner membrane. It carries out the reaction K(+)(out) + ATP + H2O = K(+)(in) + ADP + phosphate + H(+). Its function is as follows. Part of the high-affinity ATP-driven potassium transport (or Kdp) system, which catalyzes the hydrolysis of ATP coupled with the electrogenic transport of potassium into the cytoplasm. This subunit is responsible for energy coupling to the transport system and for the release of the potassium ions to the cytoplasm. The sequence is that of Potassium-transporting ATPase ATP-binding subunit from Escherichia coli (strain SMS-3-5 / SECEC).